Reading from the N-terminus, the 317-residue chain is GTPase Era (317 aa).

One can recognise an Era-type G domain in the interval 17-190; that stretch reads RAGFACFVGR…ADLLTPLLPE (174 aa). Residues 25–32 are G1; that stretch reads GRPNAGKS. 25–32 is a GTP binding site; sequence GRPNAGKS. The segment at 51 to 55 is G2; that stretch reads QTTRH. Positions 72–75 are G3; the sequence is DTPG. Residues 72–76 and 135–138 contribute to the GTP site; these read DTPGL and TKTD. Positions 135 to 138 are G4; that stretch reads TKTD. The interval 169–171 is G5; the sequence is VSA. The 83-residue stretch at 221–303 folds into the KH type-2 domain; the sequence is VRDELPHSIA…FLDLHVKVAK (83 aa).

Belongs to the TRAFAC class TrmE-Era-EngA-EngB-Septin-like GTPase superfamily. Era GTPase family. Monomer.

Its subcellular location is the cytoplasm. The protein localises to the cell membrane. Functionally, an essential GTPase that binds both GDP and GTP, with rapid nucleotide exchange. Plays a role in 16S rRNA processing and 30S ribosomal subunit biogenesis and possibly also in cell cycle regulation and energy metabolism. This is GTPase Era from Streptomyces coelicolor (strain ATCC BAA-471 / A3(2) / M145).